The primary structure comprises 426 residues: Inhibin beta A chain (426 aa).

A signal peptide spans 1–20; the sequence is MPLLWLRGFLLASCWIIVKS. Residues 21 to 310 constitute a propeptide that is removed on maturation; that stretch reads SPTPGSEGHS…EDHPHRRRRR (290 aa). An N-linked (GlcNAc...) asparagine glycan is attached at N165. The segment covering 177-186 has biased composition (polar residues); the sequence is QQQKHPQGSS. Disordered regions lie at residues 177–201 and 260–291; these read QQQK…MEER and KKKK…SHRP. The span at 263-275 shows a compositional bias: basic and acidic residues; the sequence is KEEEGEGKKKDGG. 4 disulfides stabilise this stretch: C314-C322, C321-C391, C350-C423, and C354-C425.

Belongs to the TGF-beta family. As to quaternary structure, dimeric, linked by one or more disulfide bonds. Inhibin A is a dimer of alpha/INHA and beta-A/INHBA. Activin A is a homodimer of beta-A/INHBA. Activin AB is a dimer of beta-A/INHBA and beta-B/INHBB. Interacts with FST and FSTL3; these interactions prevent activin A interaction to its type II receptor. Activin A interacts with ACVR2A. Activin A interacts with BMPR2. Inhibin A interacts with ACVR1; this interaction creates a non-signaling complex (NSC) that inhibits ACVR1-mediated BMP signaling. Inhibin A interacts with ACVR2A.

The protein resides in the secreted. In terms of biological role, inhibins/activins are involved in regulating a number of diverse functions such as hypothalamic and pituitary hormone secretion, gonadal hormone secretion, germ cell development and maturation, erythroid differentiation, insulin secretion, nerve cell survival, embryonic axial development or bone growth, depending on their subunit composition. Its function is as follows. Activin A is a homodimer of INHBA that plays a role in several essential biological processes including embryonic development, stem cell maintenance and differentiation, haematopoiesis, cell proliferation and tissue fibrosis. Signals through type I (such as ACVR1B or ACVR1C) and type II receptors (such as ACVR2A, ACVR2B or BMPR2) which, upon ligand binding, phosphorylate SMAD2 and SMAD3 intracellular signaling mediators that form a complex with SMAD4, translocate to the nucleus and modulate gene expression. Can also activate alternative non-canonical intracellular signaling pathways including the p38 MAPK, extracellular signal-regulated kinases 1/2 (ERK1/2) and c-Jun N-terminal kinases (JNKs) to modulate cell migration and differentiation. Alternatively, promotes osteoblastic differentiation via ACVRL1-SMAD1/5/9 pathway. In addition, can engage the type I receptor ACVR1 to form an ACVR1-activin A-type II receptor non-signaling complex (NSC) that renders receptors unavailable for engagement with BMPs, hence resulting in an apparent inhibition of ACVR1-mediated BMP signaling. Functionally, inhibin A is a dimer of alpha/INHA and beta-A/INHBA that functions as a feedback regulator in the hypothalamic-pituitary-gonadal (HPG) axis. Inhibits the secretion of FSH from the anterior pituitary gland by acting on pituitary gonadotrope cells. Antagonizes activin A by binding to the proteoglycan, betaglycan, and forming a stable complex with and, thereby, sequestering type II activin receptors while excluding type I receptor. The protein is Inhibin beta A chain (INHBA) of Equus caballus (Horse).